The primary structure comprises 275 residues: Autophagy-related protein 5 (275 aa).

Lysine 129 is covalently cross-linked (Glycyl lysine isopeptide (Lys-Gly) (interchain with G-Cter in lgg-3/ATG12)). A compositionally biased stretch (low complexity) spans 221 to 231 (LSSSSSSSTDS). Positions 221-241 (LSSSSSSSTDSQSEHPPRLIS) are disordered.

This sequence belongs to the ATG5 family. As to quaternary structure, most likely a component of a complex at least containing atg-5, lgg-3/ATG12, atg-16.1 and/or atg-16.2. Interacts with lgg-3/ATG12. Interacts with atg-16.1 (via N-terminus) and atg-16.2 (via N-terminus). Conjugated to lgg-3/ATG12; which is essential for autophagy.

Its subcellular location is the preautophagosomal structure membrane. In terms of biological role, involved in autophagic vesicle formation. Conjugation with lgg-3/ATG12, through a ubiquitin-like conjugating system involving atg-7 as an E1-like activating enzyme and atg-10 as an E2-like conjugating enzyme, is essential for its function. Most likely a component of an atg-5-lgg-3-atg-16 complex that promotes autophagosome formation by associating with lgg-2, but not lgg-1, at the preautophagosomal membrane. Probably, as part of an atg-5-lgg-3-atg-16 complex, required for lgg-1 lipidation; the complex acts as an E3-like enzyme promoting atg-3-mediated lgg-1 lipidation. Furthermore, association with atg-16.2 is required for the nucleation of lgg-1 positive autophagic vesicles. The polypeptide is Autophagy-related protein 5 (Caenorhabditis elegans).